A 663-amino-acid chain; its full sequence is MENNLFKIHSDYKPTGDQPTAIDSIVKNIENGVKDQVLLGVTGSGKTFTIANVIERVQRPSLIIAPNKTLAAQLYSEYKKFFPENAVEYFVSYYDYYQPEAYIKTTDTYIEKDSSVNDEIDKLRNAATAALIHRRDVIIVASVSSIYGLGSPDTYRRMTIPIDKQTGISRKELMKRLIALRYDRNDVAFERGQFRIKGDVIDIYPSYMNNGYRLEYWGDDLEEISEINTLTGQKVKKNLERIVIYPATQYLTADDDKDRIIQEIKDDLKVEVKKFEDDKKLLEAQRLRQRTEYDLEMITEIGYCKGIENYSRYLAGKNPGDTPDTLFEYFPKDFLLFIDESHITVPQVRGMYNGDRARKESLVENGFRLKAALDNRPLRFEEFREKSNQTVFISATPGDFEVEVSDNHIAEQLIRPTGIVDPEIEIRPTKNQVDDLLDEIRKRAAKKERVLVTTLTKKIAEELTEYYIELGVKVKYMHSDIDTLERIEIIRALRKGEIDVIIGINLLREGLDIPEVSLVAIMEADKEGFLRSRRSLVQTIGRAARNVEGRVILYADIMTDSMKEAITETERRRKIQKEYNAYNHIDPKSIIKEIAEDLINLDYGIEEKKFENDKKVFRNKTDIEKEITKLEKKIKKLVEELDFEQAIILRDEMLKLKELLLEF.

The region spanning 27–414 (KNIENGVKDQ…SDNHIAEQLI (388 aa)) is the Helicase ATP-binding domain. 40-47 (GVTGSGKT) contributes to the ATP binding site. The Beta-hairpin signature appears at 93–116 (YYDYYQPEAYIKTTDTYIEKDSSV). Residues 432 to 594 (QVDDLLDEIR…IDPKSIIKEI (163 aa)) form the Helicase C-terminal domain. Residues 624 to 659 (EKEITKLEKKIKKLVEELDFEQAIILRDEMLKLKEL) enclose the UVR domain.

Belongs to the UvrB family. In terms of assembly, forms a heterotetramer with UvrA during the search for lesions. Interacts with UvrC in an incision complex.

It is found in the cytoplasm. Its function is as follows. The UvrABC repair system catalyzes the recognition and processing of DNA lesions. A damage recognition complex composed of 2 UvrA and 2 UvrB subunits scans DNA for abnormalities. Upon binding of the UvrA(2)B(2) complex to a putative damaged site, the DNA wraps around one UvrB monomer. DNA wrap is dependent on ATP binding by UvrB and probably causes local melting of the DNA helix, facilitating insertion of UvrB beta-hairpin between the DNA strands. Then UvrB probes one DNA strand for the presence of a lesion. If a lesion is found the UvrA subunits dissociate and the UvrB-DNA preincision complex is formed. This complex is subsequently bound by UvrC and the second UvrB is released. If no lesion is found, the DNA wraps around the other UvrB subunit that will check the other stand for damage. The chain is UvrABC system protein B from Fusobacterium nucleatum subsp. nucleatum (strain ATCC 25586 / DSM 15643 / BCRC 10681 / CIP 101130 / JCM 8532 / KCTC 2640 / LMG 13131 / VPI 4355).